The primary structure comprises 266 residues: Glucosamine-6-phosphate deaminase (266 aa).

The active-site Proton acceptor; for enolization step is Asp-72. The active-site For ring-opening step is the Asp-141. His-143 acts as the Proton acceptor; for ring-opening step in catalysis. The active-site For ring-opening step is Glu-148.

It belongs to the glucosamine/galactosamine-6-phosphate isomerase family. NagB subfamily. Homohexamer.

It carries out the reaction alpha-D-glucosamine 6-phosphate + H2O = beta-D-fructose 6-phosphate + NH4(+). Its pathway is amino-sugar metabolism; N-acetylneuraminate degradation; D-fructose 6-phosphate from N-acetylneuraminate: step 5/5. With respect to regulation, allosterically activated by N-acetylglucosamine 6-phosphate (GlcNAc6P). Catalyzes the reversible isomerization-deamination of glucosamine 6-phosphate (GlcN6P) to form fructose 6-phosphate (Fru6P) and ammonium ion. In Salmonella typhimurium (strain LT2 / SGSC1412 / ATCC 700720), this protein is Glucosamine-6-phosphate deaminase.